The primary structure comprises 158 residues: Transcriptional repressor NrdR (158 aa).

Residues 3–34 (CPYCGYPDSKVIDSRPTDDNTSIRRRRECLKC) fold into a zinc finger. Positions 49–139 (ILVIKKDNRR…VYRQFKDINT (91 aa)) constitute an ATP-cone domain.

The protein belongs to the NrdR family. Requires Zn(2+) as cofactor.

Functionally, negatively regulates transcription of bacterial ribonucleotide reductase nrd genes and operons by binding to NrdR-boxes. The chain is Transcriptional repressor NrdR from Thermoanaerobacter sp. (strain X514).